The primary structure comprises 205 residues: Small ribosomal subunit protein uS4 (205 aa).

Residues 1–12 show a composition bias toward basic residues; it reads MSKRIQAKHKLD. The disordered stretch occupies residues 1 to 49; it reads MSKRIQAKHKLDRRMGQNIWGRPKSPVNRREYGPGQHGQRRKGKLSDFG. The 63-residue stretch at 94 to 156 folds into the S4 RNA-binding domain; that stretch reads RRLDAVIYRA…SKQLEIVVVA (63 aa).

This sequence belongs to the universal ribosomal protein uS4 family. In terms of assembly, part of the 30S ribosomal subunit. Contacts protein S5. The interaction surface between S4 and S5 is involved in control of translational fidelity.

Functionally, one of the primary rRNA binding proteins, it binds directly to 16S rRNA where it nucleates assembly of the body of the 30S subunit. With S5 and S12 plays an important role in translational accuracy. In Methylobacterium nodulans (strain LMG 21967 / CNCM I-2342 / ORS 2060), this protein is Small ribosomal subunit protein uS4.